Here is a 190-residue protein sequence, read N- to C-terminus: Segregation and condensation protein B (190 aa).

The protein belongs to the ScpB family. In terms of assembly, homodimer. Homodimerization may be required to stabilize the binding of ScpA to the Smc head domains. Component of a cohesin-like complex composed of ScpA, ScpB and the Smc homodimer, in which ScpA and ScpB bind to the head domain of Smc. The presence of the three proteins is required for the association of the complex with DNA.

The protein resides in the cytoplasm. Functionally, participates in chromosomal partition during cell division. May act via the formation of a condensin-like complex containing Smc and ScpA that pull DNA away from mid-cell into both cell halves. This Bacillus cereus (strain ATCC 10987 / NRS 248) protein is Segregation and condensation protein B.